Here is a 288-residue protein sequence, read N- to C-terminus: Nucleotide-binding protein Veis_1053 (288 aa).

Residue 10 to 17 coordinates ATP; the sequence is GMSGSGKS. 59–62 serves as a coordination point for GTP; the sequence is DVRS.

Belongs to the RapZ-like family.

Functionally, displays ATPase and GTPase activities. The polypeptide is Nucleotide-binding protein Veis_1053 (Verminephrobacter eiseniae (strain EF01-2)).